Consider the following 121-residue polypeptide: Ribonuclease P protein component (121 aa).

This sequence belongs to the RnpA family. Consists of a catalytic RNA component (M1 or rnpB) and a protein subunit.

The enzyme catalyses Endonucleolytic cleavage of RNA, removing 5'-extranucleotides from tRNA precursor.. Its function is as follows. RNaseP catalyzes the removal of the 5'-leader sequence from pre-tRNA to produce the mature 5'-terminus. It can also cleave other RNA substrates such as 4.5S RNA. The protein component plays an auxiliary but essential role in vivo by binding to the 5'-leader sequence and broadening the substrate specificity of the ribozyme. In Geobacillus kaustophilus (strain HTA426), this protein is Ribonuclease P protein component.